The sequence spans 318 residues: Protoheme IX farnesyltransferase (318 aa).

9 consecutive transmembrane segments (helical) span residues 37–57 (LVIF…HPVI), 58–78 (AFTA…LNMW), 100–120 (VTAR…VMTM), 122–142 (VLVN…YLVV), 155–175 (IVIG…AVTG), 182–202 (FVLF…LALY), 228–248 (IMLY…LGFA), 251–271 (LYMG…FGIW), and 291–311 (ILYL…GLGG).

It belongs to the UbiA prenyltransferase family. Protoheme IX farnesyltransferase subfamily.

It localises to the cell inner membrane. It catalyses the reaction heme b + (2E,6E)-farnesyl diphosphate + H2O = Fe(II)-heme o + diphosphate. Its pathway is porphyrin-containing compound metabolism; heme O biosynthesis; heme O from protoheme: step 1/1. Converts heme B (protoheme IX) to heme O by substitution of the vinyl group on carbon 2 of heme B porphyrin ring with a hydroxyethyl farnesyl side group. The chain is Protoheme IX farnesyltransferase from Parvibaculum lavamentivorans (strain DS-1 / DSM 13023 / NCIMB 13966).